The following is a 1150-amino-acid chain: Voltage-dependent calcium channel subunit alpha-2/delta-2 (1150 aa).

An N-terminal signal peptide occupies residues 1 to 18; the sequence is MAVPARTCGASRPGPART. The interval 1 to 41 is disordered; sequence MAVPARTCGASRPGPARTARPWPGCGPHPGPGTRRPTSGPP. At 19-1113 the chain is on the extracellular side; sequence ARPWPGCGPH…TEDTSDCGRG (1095 aa). Residues 291–469 enclose the VWFA domain; the sequence is DMVIIVDVSG…INTQEYLDVL (179 aa). Residues Asp-297, Ser-299, and Ser-301 each coordinate a divalent metal cation. The MIDAS-like motif signature appears at 297–301; the sequence is DVSGS. Residues Asn-386, Asn-418, Asn-507, Asn-540, Asn-624, and Asn-861 are each glycosylated (N-linked (GlcNAc...) asparagine). Cysteines 443 and 1098 form a disulfide. The Cache domain occupies 485-574; the sequence is WTNVYEDALG…KPQTTNFREP (90 aa). A helical transmembrane segment spans residues 1114–1134; that stretch reads ASFPPSLGVLVSLQLLLLLGL. Over 1135 to 1150 the chain is Cytoplasmic; it reads PPRPQPQVLVHASRRL.

This sequence belongs to the calcium channel subunit alpha-2/delta family. In terms of assembly, dimer formed of alpha-2-2 and delta-2 chains; disulfide-linked. Voltage-dependent calcium channels are multisubunit complexes, consisting of alpha-1 (CACNA1), alpha-2 (CACNA2D), beta (CACNB) and delta (CACNA2D) subunits in a 1:1:1:1 ratio. Post-translationally, may be proteolytically processed into subunits alpha-2-2 and delta-2 that are disulfide-linked. It is however unclear whether such cleavage really takes place in vivo and has a functional role. In terms of tissue distribution, predominantly present in cerebellar cortex. Present in various lung tumor cell lines, while it is absent in normal lung (at protein level). Highly expressed in heart, lung, testis, pancreas and skeletal muscle. Also expressed in kidney, liver, placenta and brain.

It localises to the membrane. The alpha-2/delta subunit of voltage-dependent calcium channels regulates calcium current density and activation/inactivation kinetics of the calcium channel. Acts as a regulatory subunit for P/Q-type calcium channel (CACNA1A), N-type (CACNA1B), L-type (CACNA1C OR CACNA1D) and possibly T-type (CACNA1G). Overexpression induces apoptosis. The sequence is that of Voltage-dependent calcium channel subunit alpha-2/delta-2 (CACNA2D2) from Homo sapiens (Human).